The sequence spans 688 residues: Glycine--tRNA ligase beta subunit (688 aa).

This sequence belongs to the class-II aminoacyl-tRNA synthetase family. As to quaternary structure, tetramer of two alpha and two beta subunits.

It is found in the cytoplasm. The enzyme catalyses tRNA(Gly) + glycine + ATP = glycyl-tRNA(Gly) + AMP + diphosphate. This Lactobacillus delbrueckii subsp. bulgaricus (strain ATCC BAA-365 / Lb-18) protein is Glycine--tRNA ligase beta subunit.